The following is a 543-amino-acid chain: MAKRIIYNEQARRALERGIDILAESVAVTLGPKGRNVVLEKKFGAPQIINDGVTIAKEIELEDHIENTGVALIRQAASKTNDAAGDGTTTATVLAHAMVKAGLKNVAAGANAITLKKGIDKATEFLVEKIKDHSKPISDSNAIAQCGTIAAGNDEEVGKMIADAMDKVGKEGVISLEEGKSMTTELEVTEGMRFDKGYISPYFATDTERMEAVLDEPYILLTDKKIGLVQDLVPVLEQVAKTGKPLLIIAEDIEKEALATLVVNRLRGVLNVAAVKAPGFGDRRKAMLEDMAVLTNGQLITEDAGLKLENATLDMLGTSRRVTINKDTSTIVAEGNEVAVNARCEQIKKQMDETDSTYDKEKLQERLAKLSGGVAVVKVGAATETEMKDKKLRLEDAINATKAAVEEGIVPGGGTTLAHLAPALGDWSSSNLSGEELIGANIVEAALTSPLMRIAENAGANGAVVAENVKSKPVNDGYNAATGEYVDMLSAGIVDPAKVTRSGLQNAASIAGMVLTTECIVADLPEKKDSSSAGGGMGGDFDY.

ATP-binding positions include 29–32 (TLGP), 86–90 (DGTTT), G413, 479–481 (NAA), and D495.

The protein belongs to the chaperonin (HSP60) family. As to quaternary structure, forms a cylinder of 14 subunits composed of two heptameric rings stacked back-to-back. Interacts with the co-chaperonin GroES.

The protein resides in the cytoplasm. It catalyses the reaction ATP + H2O + a folded polypeptide = ADP + phosphate + an unfolded polypeptide.. Its function is as follows. Together with its co-chaperonin GroES, plays an essential role in assisting protein folding. The GroEL-GroES system forms a nano-cage that allows encapsulation of the non-native substrate proteins and provides a physical environment optimized to promote and accelerate protein folding. The chain is Chaperonin GroEL 1 from Prochlorococcus marinus (strain NATL2A).